Here is a 174-residue protein sequence, read N- to C-terminus: Shikimate kinase 2 (174 aa).

12–17 contacts ATP; the sequence is GCGKTT. Mg(2+)-binding residues include threonine 16 and aspartate 32. Aspartate 34, arginine 58, and glycine 79 together coordinate substrate. Positions 112–126 are LID domain; the sequence is QAAPEEDLRPTLTGK. Arginine 120 contacts ATP. Arginine 139 lines the substrate pocket.

The protein belongs to the shikimate kinase family. AroL subfamily. Monomer. Mg(2+) is required as a cofactor.

It is found in the cytoplasm. It catalyses the reaction shikimate + ATP = 3-phosphoshikimate + ADP + H(+). It functions in the pathway metabolic intermediate biosynthesis; chorismate biosynthesis; chorismate from D-erythrose 4-phosphate and phosphoenolpyruvate: step 5/7. Its function is as follows. Catalyzes the specific phosphorylation of the 3-hydroxyl group of shikimic acid using ATP as a cosubstrate. The polypeptide is Shikimate kinase 2 (Escherichia coli O1:K1 / APEC).